A 202-amino-acid chain; its full sequence is Nudix hydrolase 13, mitochondrial (202 aa).

In terms of domain architecture, Nudix hydrolase spans 18 to 167 (NFRLVSGCIP…WMQSALEEFL (150 aa)). The Nudix box signature appears at 65–86 (GGWEDDETVLEAASREAMEEAG). The Mg(2+) site is built by E80 and E84.

Belongs to the Nudix hydrolase family. Monomer. The cofactor is Mg(2+). As to expression, expressed in roots, leaves, stems and inflorescences.

Its subcellular location is the mitochondrion. With respect to regulation, inhibited by fluoride. Functionally, mediates the hydrolysis of some nucleoside diphosphate derivatives. Can use diadenosine 5',5'''-P(1)P(6) hexaphosphate (Ap(6)A), diadenosine 5',5'''-P(1)P(5) pentaphosphate (Ap(5)A) and adenosine tetraphosphate (p(4)A) as substrates, but not diadenosine 5',5'''-P(1)P(4) tetraphosphate (Ap(4)A), diadenosine 5',5'''-P(1)P(3) triphosphate (Ap(3)A), deoxyribonucleoside triphosphates, ribonucleoside triphosphates, diphosphoinositol pentakisphosphate (PP-InsP(5)) and 5-phospho-alpha-D-ribosyl diphosphate (PRPP). The sequence is that of Nudix hydrolase 13, mitochondrial (NUDT13) from Arabidopsis thaliana (Mouse-ear cress).